Reading from the N-terminus, the 687-residue chain is Mitochondrial 15S rRNA processing factor ppr3 (687 aa).

The N-terminal 49 residues, M1–C49, are a transit peptide targeting the mitochondrion. PPR repeat units lie at residues N262–P296, S297–I331, S334–P368, and T372–P407.

The protein belongs to the CCM1 family. In terms of assembly, binds to mitochondrial small subunit 15S rRNA.

It localises to the mitochondrion. In terms of biological role, regulates mitochondrial small subunit maturation by controlling 15S rRNA 5'-end processing. Localizes to the 5' precursor of the 15S rRNA in a position that is subsequently occupied by mS47 in the mature yeast mtSSU. Uses structure and sequence-specific RNA recognition, binding to a single-stranded region of the precursor and specifically recognizing bases -6 to -1. The exchange of Ccm1 for mS47 is coupled to the irreversible removal of precursor rRNA that is accompanied by conformational changes of the mitoribosomal proteins uS5m and mS26. These conformational changes signal completion of 5'-end rRNA processing through protection of the mature 5'-end of the 15S rRNA and stabilization of mS47. The removal of the 5' precursor together with the dissociation of Ccm1 may be catalyzed by the 5'-3' exoribonuclease Pet127. Involved in the specific removal of group I introns in mitochondrial encoded transcripts. This is Mitochondrial 15S rRNA processing factor ppr3 from Schizosaccharomyces pombe (strain 972 / ATCC 24843) (Fission yeast).